A 255-amino-acid polypeptide reads, in one-letter code: Putative expansin-A27 (255 aa).

Positions 1–24 are cleaved as a signal peptide; that stretch reads MGAMAENLLVLCTILAARMALAAA. Residues 45–160 enclose the Expansin-like EG45 domain; that stretch reads GGACGYGNLY…RRVRCWRRGG (116 aa). Residues 170–249 form the Expansin-like CBD domain; that stretch reads HFELVLVANV…GWKFGQTFST (80 aa).

The protein belongs to the expansin family. Expansin A subfamily.

It localises to the secreted. It is found in the cell wall. The protein localises to the membrane. Functionally, may cause loosening and extension of plant cell walls by disrupting non-covalent bonding between cellulose microfibrils and matrix glucans. No enzymatic activity has been found. May be required for rapid internodal elongation in deepwater rice during submergence. In Oryza sativa subsp. japonica (Rice), this protein is Putative expansin-A27 (EXPA27).